A 414-amino-acid polypeptide reads, in one-letter code: Acyltransferase MYCGRDRAFT_85486 (414 aa).

The span at 16 to 25 (DGTSTVTIRP) shows a compositional bias: polar residues. Residues 16 to 47 (DGTSTVTIRPTQKAAPSEEPSQDTAPSKKDSN) are disordered. H329 contacts substrate. E367 serves as the catalytic Proton acceptor.

It belongs to the lysine N-acyltransferase mbtK family.

Its pathway is siderophore biosynthesis. In terms of biological role, acyltransferase; part of the gene cluster 14 that mediates the biosynthesis of a ferrichrome A-like siderophore which may contribute to organismal virulence. The first step of siderophore biosynthesis is performed by the HMG-CoA synthase (HMGS) MYCGRDRAFT_54740 which catalyzes the generation of HMG-CoA and CoA using acetoacetyl-CoA and acetyl-CoA as substrates. The enoyl-CoA isomerase/hydratase MYCGRDRAFT_76805 then catalyzes the conversion of HMG-CoA to methylglutaconyl-CoA. The acyltransferase MYCGRDRAFT_85486 then fuses methylglutaconyl-CoA with hydroxyornithine to yield methylglutaconyl hydroxyornithine. Methylglutaconyl hydroxyornithine is then available for use by the nonribosomal peptide synthetase NRPS2 to generate the ferrichrome A-like siderophore. This chain is Acyltransferase MYCGRDRAFT_85486, found in Zymoseptoria tritici (strain CBS 115943 / IPO323) (Speckled leaf blotch fungus).